We begin with the raw amino-acid sequence, 241 residues long: 1-(5-phosphoribosyl)-5-[(5-phosphoribosylamino)methylideneamino] imidazole-4-carboxamide isomerase (241 aa).

Catalysis depends on D10, which acts as the Proton acceptor. D131 serves as the catalytic Proton donor.

Belongs to the HisA/HisF family.

It localises to the cytoplasm. It carries out the reaction 1-(5-phospho-beta-D-ribosyl)-5-[(5-phospho-beta-D-ribosylamino)methylideneamino]imidazole-4-carboxamide = 5-[(5-phospho-1-deoxy-D-ribulos-1-ylimino)methylamino]-1-(5-phospho-beta-D-ribosyl)imidazole-4-carboxamide. The protein operates within amino-acid biosynthesis; L-histidine biosynthesis; L-histidine from 5-phospho-alpha-D-ribose 1-diphosphate: step 4/9. This is 1-(5-phosphoribosyl)-5-[(5-phosphoribosylamino)methylideneamino] imidazole-4-carboxamide isomerase from Hyphomonas neptunium (strain ATCC 15444).